Here is a 376-residue protein sequence, read N- to C-terminus: Copper-containing nitrite reductase (376 aa).

A signal peptide (tat-type signal) is located at residues 1-33; it reads MSEQFQMTRRSMLAGAAIAGAVTPLIGAVSAHA. Plastocyanin-like domains follow at residues 98-193 and 258-359; these read MTFN…IMVL and GAVG…FAVT. Residues H131, H136, H171, C172, H181, M186, and H342 each contribute to the Cu cation site.

It belongs to the multicopper oxidase family. Homotrimer. Requires Cu(2+) as cofactor. Cu(+) is required as a cofactor. FAD serves as cofactor. Post-translationally, predicted to be exported by the Tat system. The position of the signal peptide cleavage has not been experimentally proven.

It localises to the periplasm. The enzyme catalyses nitric oxide + Fe(III)-[cytochrome c] + H2O = Fe(II)-[cytochrome c] + nitrite + 2 H(+). Its pathway is nitrogen metabolism; nitrate reduction (denitrification); dinitrogen from nitrate: step 2/4. In Rhizobium meliloti (strain 1021) (Ensifer meliloti), this protein is Copper-containing nitrite reductase (nirK).